Consider the following 88-residue polypeptide: Large ribosomal subunit protein bL27 (88 aa).

The segment at 1-21 (MAHKKGASSSRNGRDSAAHRL) is disordered.

The protein belongs to the bacterial ribosomal protein bL27 family.

The protein is Large ribosomal subunit protein bL27 of Mycobacterium ulcerans (strain Agy99).